Here is a 961-residue protein sequence, read N- to C-terminus: Leucine-rich repeat-containing protein egg-6 (961 aa).

The first 18 residues, 1–18 (MRWLTLIAVAHLIAFLSS), serve as a signal peptide directing secretion. Residues 19–854 (AEITCPRIPE…EQNERHRNIR (836 aa)) lie on the Extracellular side of the membrane. 17 LRR repeats span residues 60–78 (IDEL…SLPF), 79–101 (NGLR…AWRH), 103–124 (EATI…VFGN), 125–148 (LSTL…AFNG), 150–172 (SALT…SLDA), 174–197 (KASL…ILRN), 199–222 (ANLM…LMNL), 223–245 (PFLR…AFMN), 247–269 (PQLQ…RLQG), 270–294 (FKNL…DLPN), 305–316 (ITKIETLAFSNN), 317–339 (PNLQ…SFES), 340–363 (LDKL…MFDG), 364–387 (MKNL…SFAQ), 388–411 (LAHL…TFDK), 413–435 (SKLF…VFKK), and 437–455 (ISNI…SFNE). Residues 855–875 (IITAIALAFVGAVTVVVIIFF) traverse the membrane as a helical segment. The Cytoplasmic portion of the chain corresponds to 876 to 961 (VNYTKKQRRL…PQAVSHRSRH (86 aa)). The tract at residues 890-943 (VYRSSPSSSGSSGQNAANESGRSSAAPSPIRPPLMNIPKTPNNRTMESTFGQPQ) is disordered. Positions 893 to 902 (SSPSSSGSSG) are enriched in low complexity. Over residues 928-943 (KTPNNRTMESTFGQPQ) the composition is skewed to polar residues.

In terms of tissue distribution, in L1 larvae, expressed in a subset of epithelial cells including epidermal, vulval and rectal cells and the excretory duct and pore. Also detected in some neurons. Absent from internal epithelia such as the gut and pharyngeal tubes.

It localises to the apical cell membrane. Functionally, required for apical extracellular matrix organization and epithelial junction maintenance. In Caenorhabditis elegans, this protein is Leucine-rich repeat-containing protein egg-6.